A 314-amino-acid polypeptide reads, in one-letter code: uncharacterized protein (314 aa).

The disordered stretch occupies residues 1-70 (MAGNSQRRGA…QGRHKKTDDT (70 aa)). Basic residues predominate over residues 43–65 (QRPHHPAGKRAAKAARQAQGRHK). S-adenosyl-L-methionine-binding residues include Gly-265, Ile-285, and Leu-294.

It belongs to the class IV-like SAM-binding methyltransferase superfamily. RNA methyltransferase TrmH family.

This is an uncharacterized protein from Mycolicibacterium vanbaalenii (strain DSM 7251 / JCM 13017 / BCRC 16820 / KCTC 9966 / NRRL B-24157 / PYR-1) (Mycobacterium vanbaalenii).